The primary structure comprises 459 residues: Cysteine--tRNA ligase (459 aa).

C28 provides a ligand contact to Zn(2+). A 'HIGH' region motif is present at residues 30–40 (ITIYDYCHIGH). The Zn(2+) site is built by C209, H234, and E238. The short motif at 266–270 (KMSKS) is the 'KMSKS' region element. K269 contacts ATP.

This sequence belongs to the class-I aminoacyl-tRNA synthetase family. Monomer. Zn(2+) serves as cofactor.

Its subcellular location is the cytoplasm. It catalyses the reaction tRNA(Cys) + L-cysteine + ATP = L-cysteinyl-tRNA(Cys) + AMP + diphosphate. The protein is Cysteine--tRNA ligase of Pseudoalteromonas translucida (strain TAC 125).